We begin with the raw amino-acid sequence, 348 residues long: Terpene cyclase ctvD (348 aa).

Residues 2-22 (ALSAYFLLCLSVLGLDAIYGF) form a helical membrane-spanning segment. N-linked (GlcNAc...) asparagine glycosylation is present at Asn-51. Helical transmembrane passes span 77 to 97 (PGLSLQAFHFLGAIVAVWVAI), 116 to 136 (LFAMLSQVVAIAVIVPLWCAI), 161 to 181 (LIPISMVLGFGIPTIGMLLPE), 191 to 211 (QIAIAVWQIWPIYVALWHWGL), 235 to 255 (FAFVCAIIPHAVSWGLSLTLI), 283 to 303 (GLWFLQWDHLIGMGSFLLWAM), and 323 to 343 (LKVGVLCLISGPCGAAVWLLW).

It belongs to the membrane-bound ascI terpene cyclase family.

The protein localises to the membrane. It functions in the pathway mycotoxin biosynthesis. Its function is as follows. Hydrolase; part of the gene cluster that mediates the biosynthesis of citreoviridin, an inhibitor of the of F1-ATPase beta-subunit. The HR-PKS ctvA accepts acetyl-CoA as the starter unit and catalyzes eight iterations of malonyl-CoA extension and four iterations of SAM-dependent methylation at C4, C12, C14, and C16. The KR and DH domains selectively act on the first six iterations to generate the hexaene chain. In the last three iterations, the KR and DH domains terminate their functions to yield a beta,delta-diketo ester moiety, which then undergoes intramolecular cyclization to yield an alpha-pyrone intermediate. Subsequently, ctvB methylates the alpha-pyrone hydroxyl group to generate citreomontanin. In order to form the tetrahydrofuran ring with the correct stereochemistry, the terminal alkenes of citreomontanin need to undergo isomerization to yield a (17Z)-hexaene, a step that could be catalyzed by ctvC. The (17Z)-hexaene then undergoes bisepoxidation by ctvC to form a (17R,16R,15S,14R)-bisepoxide moiety. Lastly, ctvD acts as a regioselective hydrolase to form the tetrahydrofuran ring with the substituents in the correct absolute configuration, completing the biosynthesis of citreoviridin. This is Terpene cyclase ctvD from Aspergillus terreus (strain NIH 2624 / FGSC A1156).